The sequence spans 567 residues: PEX5-related protein (567 aa).

The segment at 56 to 105 (SEPVSQPQTKAKKSEPSSKSSSLKKKADGSDLISADAEQRAQALRGPETS) is disordered. Residue S146 is modified to Phosphoserine. The disordered stretch occupies residues 150-169 (LWSAEHRSQPELSTGKSALN). 3 positions are modified to phosphoserine: S194, S198, and S202. TPR repeat units lie at residues 267 to 300 (WPGA…DPGD), 301 to 334 (AEAW…QPNN), and 336 to 368 (KALM…NPKY). Residues S386 and S388 each carry the phosphoserine modification. TPR repeat units lie at residues 415 to 448 (PDLQ…RPED), 450 to 482 (SLWN…QPGF), and 484 to 516 (RSRY…QRKS).

The protein belongs to the peroxisomal targeting signal receptor family. Interacts with RAB8B. Forms an obligate 4:4 complex with HCN2. Interacts with HCN3. Interacts with HCN4 with a 4:4 HCN4:PEX5L stoichiometry; reduces the effects of cAMP on the voltage-dependence and rate of activation of HCN4.

It is found in the cytoplasm. It localises to the membrane. Accessory subunit of hyperpolarization-activated cyclic nucleotide-gated (HCN) channels, regulating their cell-surface expression and cyclic nucleotide dependence. This is PEX5-related protein (Pex5l) from Mus musculus (Mouse).